Reading from the N-terminus, the 1095-residue chain is DNA-directed RNA polymerase subunit beta'' (1095 aa).

Positions 220, 293, 300, and 303 each coordinate Zn(2+).

The protein belongs to the RNA polymerase beta' chain family. RpoC2 subfamily. In plastids the minimal PEP RNA polymerase catalytic core is composed of four subunits: alpha, beta, beta', and beta''. When a (nuclear-encoded) sigma factor is associated with the core the holoenzyme is formed, which can initiate transcription. Zn(2+) serves as cofactor.

It localises to the plastid. It is found in the chloroplast. It catalyses the reaction RNA(n) + a ribonucleoside 5'-triphosphate = RNA(n+1) + diphosphate. Its function is as follows. DNA-dependent RNA polymerase catalyzes the transcription of DNA into RNA using the four ribonucleoside triphosphates as substrates. The protein is DNA-directed RNA polymerase subunit beta'' of Zygnema circumcarinatum (Green alga).